A 330-amino-acid chain; its full sequence is Putative heme-binding peroxidase (330 aa).

H38 (proton acceptor) is an active-site residue. H162 lines the heme b pocket. Catalysis depends on W178, which acts as the Tryptophan radical intermediate. A disordered region spans residues 286–330 (GEYKSAPQKSPVPGAPGAGKDGEANPLARQNERAHGQAQHALAKL).

The protein belongs to the peroxidase family. Cytochrome c peroxidase subfamily. Heme b is required as a cofactor.

Functionally, destroys radicals which are normally produced within the cells and which are toxic to biological systems. The polypeptide is Putative heme-binding peroxidase (CCP2) (Mycosarcoma maydis (Corn smut fungus)).